The chain runs to 277 residues: Shikimate dehydrogenase (NADP(+)) (277 aa).

Shikimate contacts are provided by residues 18–20 and Thr65; that span reads SKS. The active-site Proton acceptor is the Lys69. Glu81 is an NADP(+) binding site. Shikimate-binding residues include Asn90 and Asp106. NADP(+) contacts are provided by residues 130 to 134, 154 to 159, and Met217; these read GAGGA and NRTFSK. Position 219 (Tyr219) interacts with shikimate. Residue Gly241 participates in NADP(+) binding.

The protein belongs to the shikimate dehydrogenase family. Homodimer.

The enzyme catalyses shikimate + NADP(+) = 3-dehydroshikimate + NADPH + H(+). The protein operates within metabolic intermediate biosynthesis; chorismate biosynthesis; chorismate from D-erythrose 4-phosphate and phosphoenolpyruvate: step 4/7. In terms of biological role, involved in the biosynthesis of the chorismate, which leads to the biosynthesis of aromatic amino acids. Catalyzes the reversible NADPH linked reduction of 3-dehydroshikimate (DHSA) to yield shikimate (SA). The sequence is that of Shikimate dehydrogenase (NADP(+)) from Vibrio campbellii (strain ATCC BAA-1116).